The chain runs to 87 residues: UPF0367 protein SynRCC307_0258 (87 aa).

The protein belongs to the UPF0367 family.

The sequence is that of UPF0367 protein SynRCC307_0258 from Synechococcus sp. (strain RCC307).